A 275-amino-acid polypeptide reads, in one-letter code: 4-diphosphocytidyl-2-C-methyl-D-erythritol kinase (275 aa).

Lysine 14 is an active-site residue. An ATP-binding site is contributed by 98-108 (PMGAGLGGGSS). Residue aspartate 140 is part of the active site.

The protein belongs to the GHMP kinase family. IspE subfamily.

It catalyses the reaction 4-CDP-2-C-methyl-D-erythritol + ATP = 4-CDP-2-C-methyl-D-erythritol 2-phosphate + ADP + H(+). The protein operates within isoprenoid biosynthesis; isopentenyl diphosphate biosynthesis via DXP pathway; isopentenyl diphosphate from 1-deoxy-D-xylulose 5-phosphate: step 3/6. Functionally, catalyzes the phosphorylation of the position 2 hydroxy group of 4-diphosphocytidyl-2C-methyl-D-erythritol. This is 4-diphosphocytidyl-2-C-methyl-D-erythritol kinase from Francisella philomiragia subsp. philomiragia (strain ATCC 25017 / CCUG 19701 / FSC 153 / O#319-036).